We begin with the raw amino-acid sequence, 217 residues long: 3,4-dihydroxy-2-butanone 4-phosphate synthase (217 aa).

D-ribulose 5-phosphate-binding positions include 37–38 (RE), Asp-42, 150–154 (RRGHT), and Glu-174. Glu-38 is a Mg(2+) binding site. Mg(2+) is bound at residue His-153.

It belongs to the DHBP synthase family. As to quaternary structure, homodimer. Mg(2+) serves as cofactor. The cofactor is Mn(2+).

The enzyme catalyses D-ribulose 5-phosphate = (2S)-2-hydroxy-3-oxobutyl phosphate + formate + H(+). It functions in the pathway cofactor biosynthesis; riboflavin biosynthesis; 2-hydroxy-3-oxobutyl phosphate from D-ribulose 5-phosphate: step 1/1. In terms of biological role, catalyzes the conversion of D-ribulose 5-phosphate to formate and 3,4-dihydroxy-2-butanone 4-phosphate. The chain is 3,4-dihydroxy-2-butanone 4-phosphate synthase from Yersinia pseudotuberculosis serotype O:1b (strain IP 31758).